The sequence spans 307 residues: Transaldolase (307 aa).

Lysine 125 acts as the Schiff-base intermediate with substrate in catalysis.

This sequence belongs to the transaldolase family. Type 1 subfamily. As to quaternary structure, homodimer.

It localises to the cytoplasm. It catalyses the reaction D-sedoheptulose 7-phosphate + D-glyceraldehyde 3-phosphate = D-erythrose 4-phosphate + beta-D-fructose 6-phosphate. The protein operates within carbohydrate degradation; pentose phosphate pathway; D-glyceraldehyde 3-phosphate and beta-D-fructose 6-phosphate from D-ribose 5-phosphate and D-xylulose 5-phosphate (non-oxidative stage): step 2/3. Transaldolase is important for the balance of metabolites in the pentose-phosphate pathway. The polypeptide is Transaldolase (Pseudomonas aeruginosa (strain LESB58)).